Here is a 350-residue protein sequence, read N- to C-terminus: MAYKNASSPHQKQRRTTSQVMVLVILCLIPGVFLQSYFFGYANLIQISLACLAALASEAFILKIRNRPVLNTLKDASALLTAILLAISIPPLAPWWIVVIGTIFAIIFVKQIYGGLGQNIFNPAMAGYVLLLISFPVQMTSWLPVQSLQPFSLTLMDQINAIFTGSTLDGYSVAQLSVSIDGLSMATPLNTVRDALHNGFTVTEIFNSVQFKASSWQQIYWINGAFLAGGLILLFKRIVHWHIPMSFLLGIGIFSFIAFAYSPDLNAPPLFHLFSGATMLGAFFILSDPVSASTTVKGRILYALLIAFIVVIIRNVGGYPDAVAFAVLLGNMCVPLIDYYTQPKVYGGRK.

A run of 5 helical transmembrane segments spans residues 20-40, 44-64, 68-88, 89-109, and 125-145; these read VMVL…YFFG, LIQI…ILKI, PVLN…LAIS, IPPL…IIFV, and MAGY…WLPV. Thr-187 bears the FMN phosphoryl threonine mark. The next 5 helical transmembrane spans lie at 215 to 235, 241 to 261, 267 to 287, 300 to 320, and 322 to 342; these read SWQQ…ILLF, WHIP…AFAY, APPL…FILS, ILYA…GGYP, and AVAF…YYTQ.

This sequence belongs to the NqrB/RnfD family. In terms of assembly, the complex is composed of six subunits: RnfA, RnfB, RnfC, RnfD, RnfE and RnfG. Requires FMN as cofactor.

Its subcellular location is the cell inner membrane. Part of a membrane-bound complex that couples electron transfer with translocation of ions across the membrane. The sequence is that of Ion-translocating oxidoreductase complex subunit D from Psychromonas ingrahamii (strain DSM 17664 / CCUG 51855 / 37).